The sequence spans 552 residues: Urocanate hydratase (552 aa).

Residues 49-50, glutamine 127, 173-175, glutamate 193, arginine 198, 239-240, 260-264, 270-271, and tyrosine 319 each bind NAD(+); these read GG, GMG, NA, QTSAH, and YI. Cysteine 407 is an active-site residue. Glycine 489 is an NAD(+) binding site.

The protein belongs to the urocanase family. The cofactor is NAD(+).

It is found in the cytoplasm. It carries out the reaction 4-imidazolone-5-propanoate = trans-urocanate + H2O. It participates in amino-acid degradation; L-histidine degradation into L-glutamate; N-formimidoyl-L-glutamate from L-histidine: step 2/3. Functionally, catalyzes the conversion of urocanate to 4-imidazolone-5-propionate. The polypeptide is Urocanate hydratase (Geobacillus sp. (strain WCH70)).